Reading from the N-terminus, the 661-residue chain is UvrABC system protein B (661 aa).

The Helicase ATP-binding domain occupies 25-178 (EGILKGEKFQ…DEVIRELIRM (154 aa)). 38–45 (GVTGSGKT) is an ATP binding site. A Beta-hairpin motif is present at residues 91-114 (YYDYYQPEAYIPETDTYIEKDSSI). A Helicase C-terminal domain is found at 429–591 (QIDHLIGEIR…IVPQTVRKGI (163 aa)). The 36-residue stretch at 625–660 (EEYIKELEQQMKRFAIELEFEKAAKIRDKIFELKKL) folds into the UVR domain.

This sequence belongs to the UvrB family. Forms a heterotetramer with UvrA during the search for lesions. Interacts with UvrC in an incision complex.

It is found in the cytoplasm. Functionally, the UvrABC repair system catalyzes the recognition and processing of DNA lesions. A damage recognition complex composed of 2 UvrA and 2 UvrB subunits scans DNA for abnormalities. Upon binding of the UvrA(2)B(2) complex to a putative damaged site, the DNA wraps around one UvrB monomer. DNA wrap is dependent on ATP binding by UvrB and probably causes local melting of the DNA helix, facilitating insertion of UvrB beta-hairpin between the DNA strands. Then UvrB probes one DNA strand for the presence of a lesion. If a lesion is found the UvrA subunits dissociate and the UvrB-DNA preincision complex is formed. This complex is subsequently bound by UvrC and the second UvrB is released. If no lesion is found, the DNA wraps around the other UvrB subunit that will check the other stand for damage. The chain is UvrABC system protein B from Caldicellulosiruptor saccharolyticus (strain ATCC 43494 / DSM 8903 / Tp8T 6331).